The following is a 362-amino-acid chain: Phosphoserine aminotransferase (362 aa).

Residues Ser9 and Arg42 each contribute to the L-glutamate site. Residues Gly76–Arg77, Trp102, Thr153, Asp174, and Gln197 contribute to the pyridoxal 5'-phosphate site. The residue at position 198 (Lys198) is an N6-(pyridoxal phosphate)lysine. Asn239–Thr240 provides a ligand contact to pyridoxal 5'-phosphate.

The protein belongs to the class-V pyridoxal-phosphate-dependent aminotransferase family. SerC subfamily. As to quaternary structure, homodimer. Pyridoxal 5'-phosphate is required as a cofactor.

The protein resides in the cytoplasm. It catalyses the reaction O-phospho-L-serine + 2-oxoglutarate = 3-phosphooxypyruvate + L-glutamate. The catalysed reaction is 4-(phosphooxy)-L-threonine + 2-oxoglutarate = (R)-3-hydroxy-2-oxo-4-phosphooxybutanoate + L-glutamate. Its pathway is amino-acid biosynthesis; L-serine biosynthesis; L-serine from 3-phospho-D-glycerate: step 2/3. It participates in cofactor biosynthesis; pyridoxine 5'-phosphate biosynthesis; pyridoxine 5'-phosphate from D-erythrose 4-phosphate: step 3/5. Its function is as follows. Catalyzes the reversible conversion of 3-phosphohydroxypyruvate to phosphoserine and of 3-hydroxy-2-oxo-4-phosphonooxybutanoate to phosphohydroxythreonine. This chain is Phosphoserine aminotransferase, found in Shigella dysenteriae serotype 1 (strain Sd197).